Reading from the N-terminus, the 715-residue chain is Palmitoyltransferase ZDHHC5 (715 aa).

Topologically, residues 1-13 (MPAESGKRFKPSK) are cytoplasmic. Residues 14 to 34 (YVPVSAAAIFLVGATTLFFAF) form a helical membrane-spanning segment. Topologically, residues 35-38 (TCPG) are extracellular. A helical membrane pass occupies residues 39–59 (LSLYVSPAVPIYNAIMFLFVL). The Cytoplasmic segment spans residues 60–148 (ANFSMATFMD…NCIGRRNYRY (89 aa)). The residue at position 91 (Y91) is a Phosphotyrosine. Residues 104–154 (KWCATCRFYRPPRCSHCSVCDNCVEEFDHHCPWVNNCIGRRNYRYFFLFLL) enclose the DHHC domain. The active-site S-palmitoyl cysteine intermediate is C134. Residues 149 to 169 (FFLFLLSLTAHIMGVFGFGLL) form a helical membrane-spanning segment. At 170 to 191 (YVLYHIEELSGVRTAVTMAVMC) the chain is on the extracellular side. A helical transmembrane segment spans residues 192–212 (VAGLFFIPVAGLTGFHVVLVA). Residues 213 to 715 (RGRTTNEQVT…VGGTTYEISV (503 aa)) are Cytoplasmic-facing. A Phosphoserine modification is found at S247. Positions 289 to 715 (GELRRTKSKG…VGGTTYEISV (427 aa)) are disordered. T294 carries the phosphothreonine modification. Phosphoserine occurs at positions 296 and 299. A Phosphothreonine modification is found at T303. S345 carries the phosphoserine modification. Phosphothreonine occurs at positions 348 and 350. The segment covering 359 to 373 (SSSSTSAAMPHSSSA) has biased composition (low complexity). Phosphoserine is present on residues S380, S398, S406, and S409. Residue T411 is modified to Phosphothreonine. 4 positions are modified to phosphoserine: S415, S425, S429, and S432. Low complexity predominate over residues 422 to 432 (SSGSRSSSLKS). T436 carries the post-translational modification Phosphothreonine. Positions 442-478 (QLQSIRSEGTTSTSYKSLANQTRNGSLSYDSLLTPSD) are enriched in polar residues. 2 positions are modified to phosphoserine: S529 and S554. An Omega-N-methylarginine modification is found at R617. Position 621 is a phosphoserine (S621). Residue T659 is modified to Phosphothreonine. The segment covering 666–677 (LKTTYSKSNGQP) has biased composition (polar residues). S684 and S694 each carry phosphoserine. Position 697 is an omega-N-methylarginine (R697).

The protein belongs to the DHHC palmitoyltransferase family. ERF2/ZDHHC9 subfamily.

Its subcellular location is the cell membrane. It catalyses the reaction L-cysteinyl-[protein] + hexadecanoyl-CoA = S-hexadecanoyl-L-cysteinyl-[protein] + CoA. Functionally, palmitoyltransferase that catalyzes the addition of palmitate onto various protein substrates such as CTNND2, CD36, GSDMD, NLRP3, NOD1, NOD2, STAT3 and S1PR1 thus plays a role in various biological processes including cell adhesion, inflammation, fatty acid uptake, bacterial sensing or cardiac functions. Plays an important role in the regulation of synapse efficacy by mediating palmitoylation of delta-catenin/CTNND2, thereby increasing synaptic delivery and surface stabilization of alpha-amino-3-hydroxy-5-methyl-4-isoxazole propionic acid receptors (AMPARs). Under basal conditions, remains at the synaptic membrane through FYN-mediated phosphorylation that prevents association with endocytic proteins. Neuronal activity enhances the internalization and trafficking of DHHC5 from spines to dendritic shafts where it palmitoylates delta-catenin/CTNND2. Regulates cell adhesion at the plasma membrane by palmitoylating GOLGA7B and DSG2. Plays a role in innate immune response by mediating the palmitoylation of NOD1 and NOD2 and their proper recruitment to the bacterial entry site and phagosomes. Also participates in fatty acid uptake by palmitoylating CD36 and thereby targeting it to the plasma membrane. Upon binding of fatty acids to CD36, gets phosphorylated by LYN leading to inactivation and subsequent CD36 caveolar endocytosis. Controls oligodendrocyte development by catalyzing STAT3 palmitoylation. Acts as a regulator of inflammatory response by mediating palmitoylation of NLRP3 and GSDMD. Palmitoylates NLRP3 to promote inflammasome assembly and activation. Activates pyroptosis by catalyzing palmitoylation of gasdermin-D (GSDMD), thereby promoting membrane translocation and pore formation of GSDMD. The sequence is that of Palmitoyltransferase ZDHHC5 (ZDHHC5) from Pan troglodytes (Chimpanzee).